The chain runs to 323 residues: Glyoxylate/hydroxypyruvate reductase B (323 aa).

Catalysis depends on residues Arg237 and Glu266. His285 acts as the Proton donor in catalysis.

This sequence belongs to the D-isomer specific 2-hydroxyacid dehydrogenase family. GhrB subfamily. Homodimer.

It localises to the cytoplasm. The catalysed reaction is glycolate + NADP(+) = glyoxylate + NADPH + H(+). The enzyme catalyses (R)-glycerate + NAD(+) = 3-hydroxypyruvate + NADH + H(+). It catalyses the reaction (R)-glycerate + NADP(+) = 3-hydroxypyruvate + NADPH + H(+). Its function is as follows. Catalyzes the NADPH-dependent reduction of glyoxylate and hydroxypyruvate into glycolate and glycerate, respectively. This is Glyoxylate/hydroxypyruvate reductase B from Klebsiella pneumoniae (strain 342).